Reading from the N-terminus, the 476-residue chain is UDP-N-acetylmuramate--L-alanine ligase (476 aa).

ATP is bound at residue 112–118 (GTHGKTT).

This sequence belongs to the MurCDEF family.

It localises to the cytoplasm. It carries out the reaction UDP-N-acetyl-alpha-D-muramate + L-alanine + ATP = UDP-N-acetyl-alpha-D-muramoyl-L-alanine + ADP + phosphate + H(+). Its pathway is cell wall biogenesis; peptidoglycan biosynthesis. Functionally, cell wall formation. This Magnetococcus marinus (strain ATCC BAA-1437 / JCM 17883 / MC-1) protein is UDP-N-acetylmuramate--L-alanine ligase.